A 348-amino-acid chain; its full sequence is Protein RecA (348 aa).

Residue 69–76 (GPESSGKT) participates in ATP binding.

The protein belongs to the RecA family.

The protein resides in the cytoplasm. Can catalyze the hydrolysis of ATP in the presence of single-stranded DNA, the ATP-dependent uptake of single-stranded DNA by duplex DNA, and the ATP-dependent hybridization of homologous single-stranded DNAs. It interacts with LexA causing its activation and leading to its autocatalytic cleavage. In Gluconacetobacter polyoxogenes (Acetobacter polyoxogenes), this protein is Protein RecA.